We begin with the raw amino-acid sequence, 132 residues long: Binder of sperm protein homolog 1 (132 aa).

Positions 1-17 (MGSLMLLFVETTRNSSA) are cleaved as a signal peptide. Fibronectin type-II domains follow at residues 40 to 84 (VTDG…FCSA) and 85 to 132 (EDFA…KYCE). Disulfide bonds link Cys-45/Cys-69, Cys-59/Cys-82, Cys-90/Cys-116, and Cys-104/Cys-131. Residue Asn-53 is glycosylated (N-linked (GlcNAc...) asparagine).

Belongs to the seminal plasma protein family. As to expression, expressed only in the epididymis.

Its subcellular location is the secreted. Binds sperm in vitro and promotes sperm capacitation. Specifically promotes capacitation induced by high density lipoproteins (HDLs). Also binds heparin, phospholipid liposomes, and weakly to gelatin. Does not bind chondroitin sulfate B. This is Binder of sperm protein homolog 1 (BSPH1) from Homo sapiens (Human).